Here is a 337-residue protein sequence, read N- to C-terminus: Cell-surface associated glycoprotein DFI1 (337 aa).

At 1 to 21 (MEKLSINNNNNNRRYQSRRFD) the chain is on the cytoplasmic side. Residues 22-42 (GITIIRIVVLVFIVTVSTYFV) form a helical membrane-spanning segment. Residues 43 to 269 (NSYTCNQPHH…NGGGLSHTNR (227 aa)) lie on the Extracellular side of the membrane. Residues Asn-53, Asn-65, Asn-87, and Asn-100 are each glycosylated (N-linked (GlcNAc...) asparagine). Low complexity-rich tracts occupy residues 124–220 (SSTF…TSAS) and 241–259 (SVISSSPTASNSNNNKNND). Disordered regions lie at residues 124-224 (SSTF…QHVT) and 241-265 (SVISSSPTASNSNNNKNNDNGGGLS). Residues 270–290 (IVVGVVVGVGGSILIGLLAVL) form a helical membrane-spanning segment. The Glycophorin A signature appears at 273–277 (GVVVG). Residues 291-337 (FYLRKRNNRDYEGGWTFWRKNEKLGSDEFFNGELGVRDRNINQGSNF) are Cytoplasmic-facing. Residues 301-314 (YEGGWTFWRKNEKL) carry the Calmodulin-binding motif.

This sequence belongs to the MID2 like cell wall stress sensor family. In terms of processing, cross-linked to the carbohydrate polymers of the cell wall. Post-translationally, O-glycosylated by MNT1 and MNT2. Also N-glycosylated.

Its subcellular location is the cell membrane. The protein resides in the cell septum. It is found in the secreted. The protein localises to the cell wall. Functionally, cell-surface associated glycoprotein that acts as a plasma membrane receptor-type protein which senses the presence of matrix. Binds to calmodulin in response to environmental conditions and initiates a signaling cascade that activates CEK1, thus promoting invasive filamentation. Involved in the maintenance of the cell wall. This Candida albicans (strain SC5314 / ATCC MYA-2876) (Yeast) protein is Cell-surface associated glycoprotein DFI1.